Here is a 307-residue protein sequence, read N- to C-terminus: MNRFIDLSEEVKSALEERRPVVALESTIISHGMPYPQNIETARALEEIVRENGAVPATIAIIGGKIKIGLNEEELEFMGTSKEILKASKRDLPVVLAKGLNAATTVSATMICANLAGIKVFVTGGIGGVHRGAEETFDISADLQELANTNVAVVCAGAKAILDLPRTLEYLETFGVPVIGFRTEEFPAFYTRESGLKVDYRVEDEVEAAKVIKTKWDLGLKGGILIANPIPEEYALDRAYIEKAIEEAIFEADRRGIRGKALTPFLLEKIKDLTEGKSLKANIELVKNNARVGAKIAVQLNKLYKEA.

The active-site Proton donor is Glu-25. Substrate is bound by residues Lys-86 and Val-106. Asp-138 is a binding site for Mn(2+). Substrate is bound at residue 140–142; it reads SAD. Lys-159 functions as the Nucleophile in the catalytic mechanism.

Belongs to the pseudouridine-5'-phosphate glycosidase family. Homotrimer. Requires Mn(2+) as cofactor.

The enzyme catalyses D-ribose 5-phosphate + uracil = psi-UMP + H2O. Functionally, catalyzes the reversible cleavage of pseudouridine 5'-phosphate (PsiMP) to ribose 5-phosphate and uracil. Functions biologically in the cleavage direction, as part of a pseudouridine degradation pathway. In Caldanaerobacter subterraneus subsp. tengcongensis (strain DSM 15242 / JCM 11007 / NBRC 100824 / MB4) (Thermoanaerobacter tengcongensis), this protein is Pseudouridine-5'-phosphate glycosidase.